Reading from the N-terminus, the 676-residue chain is RNA helicase NPH-II (676 aa).

The Helicase ATP-binding domain occupies 172-347 (FSAWISHRPV…VFLPNPAFIH (176 aa)). 185–192 (GGTGVGKT) serves as a coordination point for ATP. Residues 296 to 299 (DEVH) carry the DEXH box motif. A Helicase C-terminal domain is found at 366-542 (NPSSRMAYIE…KFNLTLPEDL (177 aa)).

Belongs to the DEAD box helicase family. DEAH subfamily. In terms of assembly, monomer.

It is found in the virion. The enzyme catalyses ATP + H2O = ADP + phosphate + H(+). Functionally, NTP-dependent helicase that catalyzes unidirectional unwinding of 3'tailed duplex RNAs and plays an important role during transcription of early mRNAs, presumably by preventing R-loop formation behind the elongating RNA polymerase. Might also play a role in the export of newly synthesized mRNA chains out of the core into the cytoplasm. Required for replication and propagation of viral particles. In Homo sapiens (Human), this protein is RNA helicase NPH-II (OPG084).